We begin with the raw amino-acid sequence, 332 residues long: Small ribosomal subunit protein uS2 (332 aa).

This sequence belongs to the universal ribosomal protein uS2 family.

This Nitrobacter hamburgensis (strain DSM 10229 / NCIMB 13809 / X14) protein is Small ribosomal subunit protein uS2.